We begin with the raw amino-acid sequence, 358 residues long: Peptide chain release factor 1 (358 aa).

The residue at position 232 (Gln232) is an N5-methylglutamine.

Belongs to the prokaryotic/mitochondrial release factor family. Methylated by PrmC. Methylation increases the termination efficiency of RF1.

The protein localises to the cytoplasm. Its function is as follows. Peptide chain release factor 1 directs the termination of translation in response to the peptide chain termination codons UAG and UAA. The polypeptide is Peptide chain release factor 1 (Acidobacterium capsulatum (strain ATCC 51196 / DSM 11244 / BCRC 80197 / JCM 7670 / NBRC 15755 / NCIMB 13165 / 161)).